The primary structure comprises 382 residues: Gap junction alpha-1 protein (382 aa).

Over 2–23 (GDWSALGKLLDKVQAYSTAGGK) the chain is Cytoplasmic. Residue Ser5 is modified to Phosphoserine. A helical membrane pass occupies residues 24–44 (VWLSVLFIFRILLLGTAVESA). Over 45-76 (WGDEQSAFRCNTQQPGCENVCYDKSFPISHVR) the chain is Extracellular. 2 disulfide bridges follow: Cys54–Cys192 and Cys187–Cys198. Residues 77-97 (FWVLQIIFVSVPTLLYLAHVF) traverse the membrane as a helical segment. Residues 98–155 (YVMRKEEKLNKKEEELKVAQTDGANVDMHLKQIEIKKFKYGIEEHGKVKMRGGLLRTY) are Cytoplasmic-facing. A Glycyl lysine isopeptide (Lys-Gly) (interchain with G-Cter in SUMO) cross-link involves residue Lys144. The chain crosses the membrane as a helical span at residues 156 to 176 (IISILFKSVFEVAFLLIQWYI). Residues 177 to 207 (YGFSLSAVYTCKRDPCPHQVDCFLSRPTEKT) lie on the Extracellular side of the membrane. The helical transmembrane segment at 208–228 (IFIIFMLVVSLVSLALNIIEL) threads the bilayer. The Cytoplasmic segment spans residues 229 to 382 (FYVFFKGIKD…SRPRPDDLEI (154 aa)). Lys237 participates in a covalent cross-link: Glycyl lysine isopeptide (Lys-Gly) (interchain with G-Cter in SUMO). Residues 244-382 (SDLYHATTGP…SRPRPDDLEI (139 aa)) are interaction with NOV. A Phosphotyrosine modification is found at Tyr247. 3 positions are modified to phosphoserine: Ser255, Ser257, and Ser262. Positions 264-382 (TYAYFNGCSS…SRPRPDDLEI (119 aa)) are interaction with UBQLN4. Cys271 bears the S-nitrosocysteine mark. Position 275 is a phosphothreonine (Thr275). Residues Ser306 and Ser314 each carry the phosphoserine modification. Over residues 317–332 (QNRMGQAGSTISNSHA) the composition is skewed to polar residues. The segment at 317–382 (QNRMGQAGST…SRPRPDDLEI (66 aa)) is disordered. Ser325 bears the Phosphoserine; by CK1 mark. Phosphothreonine is present on Thr326. Ser328 and Ser330 each carry phosphoserine; by CK1. Ser344 and Ser365 each carry phosphoserine. A compositionally biased stretch (low complexity) spans 362-374 (RPSSRASSRASSR). Ser368 is subject to Phosphoserine; by PKC/PRKCG and PKC/PRKCD. Ser369 and Ser373 each carry phosphoserine.

It belongs to the connexin family. Alpha-type (group II) subfamily. In terms of assembly, a connexon is composed of a hexamer of connexins. Interacts with SGSM3. Interacts with RIC1/CIP150. Interacts with CNST and CSNK1D. Interacts (via C-terminus) with TJP1. Interacts (via C-terminus) with SRC (via SH3 domain). Interacts (not ubiquitinated) with UBQLN4 (via UBA domain). Interacts with NOV. Interacts with TMEM65. Interacts with ANK3/ANKG and PKP2. In terms of processing, phosphorylation at Ser-325, Ser-328 and Ser-330 by CK1 modulates gap junction assembly. Phosphorylated at Ser-368 by PRKCG; phosphorylation induces disassembly of gap junction plaques and inhibition of gap junction activity. Phosphorylation at Ser-368 by PRKCD triggers its internalization into small vesicles leading to proteasome-mediated degradation. Sumoylated with SUMO1, SUMO2 and SUMO3, which may regulate the level of functional Cx43 gap junctions at the plasma membrane. May be desumoylated by SENP1 or SENP2. Post-translationally, S-nitrosylation at Cys-271 is enriched at the muscle endothelial gap junction in arteries, it augments channel permeability and may regulate of smooth muscle cell to endothelial cell communication. In terms of processing, acetylated in the developing cortex; leading to delocalization from the cell membrane.

It is found in the cell membrane. The protein localises to the cell junction. The protein resides in the gap junction. It localises to the endoplasmic reticulum. Functionally, gap junction protein that acts as a regulator of bladder capacity. A gap junction consists of a cluster of closely packed pairs of transmembrane channels, the connexons, through which materials of low MW diffuse from one cell to a neighboring cell. May play a critical role in the physiology of hearing by participating in the recycling of potassium to the cochlear endolymph. Negative regulator of bladder functional capacity: acts by enhancing intercellular electrical and chemical transmission, thus sensitizing bladder muscles to cholinergic neural stimuli and causing them to contract. May play a role in cell growth inhibition through the regulation of NOV expression and localization. Plays an essential role in gap junction communication in the ventricles. This chain is Gap junction alpha-1 protein (GJA1), found in Erinaceus europaeus (Western European hedgehog).